A 77-amino-acid polypeptide reads, in one-letter code: MSDIEQRVKNVVVEQLGVDEAEVTNAASFVDDLGADSLDTVELVMALEEEFGTEIPDEEAEKITTVQLAIDYVKSHQ.

The Carrier domain occupies 2 to 77; the sequence is SDIEQRVKNV…LAIDYVKSHQ (76 aa). Ser37 carries the post-translational modification O-(pantetheine 4'-phosphoryl)serine.

Belongs to the acyl carrier protein (ACP) family. In terms of processing, 4'-phosphopantetheine is transferred from CoA to a specific serine of apo-ACP by AcpS. This modification is essential for activity because fatty acids are bound in thioester linkage to the sulfhydryl of the prosthetic group.

The protein resides in the cytoplasm. It participates in lipid metabolism; fatty acid biosynthesis. Its function is as follows. Carrier of the growing fatty acid chain in fatty acid biosynthesis. This is Acyl carrier protein from Leucothrix mucor.